A 129-amino-acid polypeptide reads, in one-letter code: MITTGKRKTAVARAVAKKGKGIVTINGYPVELYPVRVLRNKIMEPLLIAEDKAKDLDIAVKVRGGGVTGQADASRTAIARAIVKYLNDTELENLFRQYDRTLIVNDVRIKLPKKAGGRGARAKKQKSYR.

It belongs to the universal ribosomal protein uS9 family.

The polypeptide is Small ribosomal subunit protein uS9 (rps9) (Thermoplasma acidophilum (strain ATCC 25905 / DSM 1728 / JCM 9062 / NBRC 15155 / AMRC-C165)).